A 274-amino-acid polypeptide reads, in one-letter code: Shikimate dehydrogenase (NADP(+)) (274 aa).

Residues 14–16 (SKS) and T60 each bind shikimate. K64 serves as the catalytic Proton acceptor. E76 is a binding site for NADP(+). Residues N85 and D101 each coordinate shikimate. NADP(+) contacts are provided by residues 126–130 (GAGGA), 150–155 (NRTAEK), and M214. Y216 lines the shikimate pocket. G238 provides a ligand contact to NADP(+).

Belongs to the shikimate dehydrogenase family. In terms of assembly, homodimer.

It carries out the reaction shikimate + NADP(+) = 3-dehydroshikimate + NADPH + H(+). It functions in the pathway metabolic intermediate biosynthesis; chorismate biosynthesis; chorismate from D-erythrose 4-phosphate and phosphoenolpyruvate: step 4/7. Involved in the biosynthesis of the chorismate, which leads to the biosynthesis of aromatic amino acids. Catalyzes the reversible NADPH linked reduction of 3-dehydroshikimate (DHSA) to yield shikimate (SA). The protein is Shikimate dehydrogenase (NADP(+)) of Pseudomonas paraeruginosa (strain DSM 24068 / PA7) (Pseudomonas aeruginosa (strain PA7)).